The sequence spans 474 residues: Dipeptidase A (474 aa).

Residue cysteine 6 is part of the active site.

The protein belongs to the peptidase C69 family. In terms of assembly, homooctamer.

It catalyses the reaction an L-aminoacyl-L-amino acid + H2O = 2 an L-alpha-amino acid. With respect to regulation, inhibited by Zn(2+), Cu(2+), Ca(2+) and Cd(2+). Its function is as follows. Hydrolyzes a wide range of dipeptides but unable to hydrolyze dipeptides containing proline. Highest activity against Met-Ala. This is Dipeptidase A (pepDA) from Lactobacillus helveticus (Lactobacillus suntoryeus).